The sequence spans 121 residues: Chromosome transmission fidelity protein 8 homolog (121 aa).

This sequence belongs to the CTF8 family. In terms of assembly, component of the CTF18-RFC complex, which consists of CTF18, CTF8, DSCC1, RFC2, RFC3, RFC4 and RFC5. The CTF18-RFC complex does not interact with the Rad9/Rad1/Hus1 complex. The CTF18-RFC complex interacts with POLH. CTF18/CTF8/DSCC1 associate with PCNA. CTF8 exists as a dimer with DSCC1.

The protein resides in the nucleus. Its function is as follows. Chromosome cohesion factor involved in sister chromatid cohesion and fidelity of chromosome transmission. Component of one of the cell nuclear antigen loader complexes, CTF18-replication factor C (CTF18-RFC), which consists of CTF18, CTF8, DSCC1, RFC2, RFC3, RFC4 and RFC5. The CTF18-RFC complex binds to single-stranded and primed DNAs and has weak ATPase activity that is stimulated the presence of primed DNA, replication protein A (RPA) and proliferating cell nuclear antigen (PCNA). The CTF18-RFC complex catalyzes the ATP-dependent loading of PCNA onto primed and gapped DNA. It also interacts with and stimulates POLH, which is suggestive of a protein network that coordinates DNA repair, recombination and chromosome cohesion reactions with replication fork progression. In Rattus norvegicus (Rat), this protein is Chromosome transmission fidelity protein 8 homolog.